A 419-amino-acid polypeptide reads, in one-letter code: UDP-N-acetylglucosamine 1-carboxyvinyltransferase (419 aa).

22–23 (KN) contacts phosphoenolpyruvate. Arg93 contributes to the UDP-N-acetyl-alpha-D-glucosamine binding site. Cys117 serves as the catalytic Proton donor. The residue at position 117 (Cys117) is a 2-(S-cysteinyl)pyruvic acid O-phosphothioketal. Residues Asp306 and Ile328 each contribute to the UDP-N-acetyl-alpha-D-glucosamine site.

Belongs to the EPSP synthase family. MurA subfamily.

It localises to the cytoplasm. It carries out the reaction phosphoenolpyruvate + UDP-N-acetyl-alpha-D-glucosamine = UDP-N-acetyl-3-O-(1-carboxyvinyl)-alpha-D-glucosamine + phosphate. Its pathway is cell wall biogenesis; peptidoglycan biosynthesis. Cell wall formation. Adds enolpyruvyl to UDP-N-acetylglucosamine. This Ruthia magnifica subsp. Calyptogena magnifica protein is UDP-N-acetylglucosamine 1-carboxyvinyltransferase.